The chain runs to 561 residues: Putative transport protein YbjL (561 aa).

The next 5 membrane-spanning stretches (helical) occupy residues 8 to 28 (LLNG…LCLG), 32 to 52 (LGSI…LLGQ), 66 to 86 (FMLF…SIFF), 94 to 114 (MLAL…GKLF), and 158 to 178 (NLSL…IVGA). 2 RCK C-terminal domains span residues 200–288 (RGLD…SFRN) and 292–373 (VFDR…RIGF). 6 consecutive transmembrane segments (helical) span residues 383–403 (LLAF…TFQF), 406–426 (FSFG…LGFM), 451–471 (VFMA…LGAI), 475–495 (MLIA…LFGA), 503–523 (ALLF…EIIS), and 540–560 (AIAN…CPGL).

Belongs to the AAE transporter (TC 2.A.81) family. YbjL subfamily.

The protein localises to the cell membrane. The sequence is that of Putative transport protein YbjL from Shigella dysenteriae serotype 1 (strain Sd197).